A 529-amino-acid polypeptide reads, in one-letter code: uncharacterized protein (529 aa).

A signal peptide spans 1-20 (MYFLILILVLLLIMVAAATA).

This is an uncharacterized protein from Orgyia pseudotsugata multicapsid polyhedrosis virus (OpMNPV).